A 52-amino-acid polypeptide reads, in one-letter code: Large ribosomal subunit protein bL32c (52 aa).

Belongs to the bacterial ribosomal protein bL32 family.

The protein localises to the plastid. The protein resides in the chloroplast. This is Large ribosomal subunit protein bL32c from Olimarabidopsis pumila (Dwarf rocket).